Reading from the N-terminus, the 555-residue chain is Sulfite reductase [NADPH] hemoprotein beta-component (555 aa).

[4Fe-4S] cluster is bound by residues cysteine 430, cysteine 436, cysteine 475, and cysteine 479. Residue cysteine 479 participates in siroheme binding.

The protein belongs to the nitrite and sulfite reductase 4Fe-4S domain family. As to quaternary structure, alpha(8)-beta(8). The alpha component is a flavoprotein, the beta component is a hemoprotein. It depends on siroheme as a cofactor. [4Fe-4S] cluster is required as a cofactor.

The enzyme catalyses hydrogen sulfide + 3 NADP(+) + 3 H2O = sulfite + 3 NADPH + 4 H(+). It participates in sulfur metabolism; hydrogen sulfide biosynthesis; hydrogen sulfide from sulfite (NADPH route): step 1/1. Functionally, component of the sulfite reductase complex that catalyzes the 6-electron reduction of sulfite to sulfide. This is one of several activities required for the biosynthesis of L-cysteine from sulfate. The chain is Sulfite reductase [NADPH] hemoprotein beta-component from Leptospira biflexa serovar Patoc (strain Patoc 1 / Ames).